The following is a 194-amino-acid chain: Fe/S biogenesis protein NfuA (194 aa).

Positions 151 and 154 each coordinate [4Fe-4S] cluster.

The protein belongs to the NfuA family. Homodimer. The cofactor is [4Fe-4S] cluster.

Its function is as follows. Involved in iron-sulfur cluster biogenesis. Binds a 4Fe-4S cluster, can transfer this cluster to apoproteins, and thereby intervenes in the maturation of Fe/S proteins. Could also act as a scaffold/chaperone for damaged Fe/S proteins. This Aliivibrio fischeri (strain ATCC 700601 / ES114) (Vibrio fischeri) protein is Fe/S biogenesis protein NfuA.